Here is a 188-residue protein sequence, read N- to C-terminus: Elongation factor P (188 aa).

It belongs to the elongation factor P family.

The protein resides in the cytoplasm. It functions in the pathway protein biosynthesis; polypeptide chain elongation. Its function is as follows. Involved in peptide bond synthesis. Stimulates efficient translation and peptide-bond synthesis on native or reconstituted 70S ribosomes in vitro. Probably functions indirectly by altering the affinity of the ribosome for aminoacyl-tRNA, thus increasing their reactivity as acceptors for peptidyl transferase. This is Elongation factor P from Streptomyces avermitilis (strain ATCC 31267 / DSM 46492 / JCM 5070 / NBRC 14893 / NCIMB 12804 / NRRL 8165 / MA-4680).